The chain runs to 423 residues: Probable sodium/metabolite cotransporter BASS3, chloroplastic (423 aa).

Residues 1 to 45 (MAAAVAASSSSSSSSCAAVGVATASHPHRHRQARFVVSPPAPASP) constitute a chloroplast transit peptide. 9 helical membrane-spanning segments follow: residues 106–126 (ALLP…PATF), 138–158 (LGGI…ALAF), 165–187 (TIGY…RAFG), 192–214 (FFAG…ASFL), 231–251 (ISSV…VVPV), 254–274 (IAMA…GLLL), 287–307 (PVMP…PLAI), 318–338 (FLLL…GYWI), and 380–400 (VPAA…ASYW).

Belongs to the bile acid:sodium symporter (BASS) (TC 2.A.28) family.

The protein localises to the membrane. It localises to the plastid. Its subcellular location is the chloroplast envelope. Its function is as follows. May function as sodium-coupled metabolite transporter across the chloroplast envelope. The sequence is that of Probable sodium/metabolite cotransporter BASS3, chloroplastic (BASS3) from Oryza sativa subsp. japonica (Rice).